We begin with the raw amino-acid sequence, 543 residues long: Cytochrome P450 monooxygenase sphH (543 aa).

Transmembrane regions (helical) follow at residues 1–21 and 32–52; these read MGPI…SVYF and IATF…YQLF. Cys-487 serves as a coordination point for heme.

This sequence belongs to the cytochrome P450 family. Heme serves as cofactor.

Its subcellular location is the membrane. The catalysed reaction is presphingofungin + 2 reduced [NADPH--hemoprotein reductase] + O2 = sphingofungin B1 + 2 oxidized [NADPH--hemoprotein reductase] + H2O + 2 H(+). The protein operates within secondary metabolite biosynthesis. In terms of biological role, cytochrome P450 monooxygenase; part of the gene cluster that mediates the biosynthesis of sphingofungins, bioactive molecules acting as sphingolipid inhibitors via inhibiting serine palmitoyl transferase (SPT). Within the pathway, sphH catalyzes the conversion of presphingofungin into sphingofungin B1 via hydroxylagtion at position C-14. Sphingofungin biosynthesis starts with the PKS sphB that produces an C18 polyketide precursor 3-hydroxyoctadeca-4,10-dienoyl-ACP containing one delta-6 desaturation and one delta-12 desaturation. The aminoacyl transferase sphA uses the sphB product to produce 3-keto-presphingofungin by adding an aminomalonate molecule. SphF then reduces the C-3 ketone of 3-keto-presphingofungin which leads to presphingofungin. The cytochrome P450 monooxygenase sphH converts presphingofungin into sphingofungin B1 which is further converted to sphingofungin B by the dioxygenase sphC. SphC is also able to convert presphingofungin into sphingofungin B2. The acetyltransferase sphE acetylates sphingofungin B to produce sphingofungin C, but can also convert sphingofungin B1 into sphingofungin C1 and sphingofungin B2 into sphingofungin C2. Finally, sphingofungin C can be spontaneously converted into sphingofungin D. The sequence is that of Cytochrome P450 monooxygenase sphH from Aspergillus fumigatus (strain CBS 144.89 / FGSC A1163 / CEA10) (Neosartorya fumigata).